The following is a 285-amino-acid chain: Tropomyosin alpha-3 chain (285 aa).

A coiled-coil region spans residues 1–285; that stretch reads MMEAIKKKMQ…DHALNDMTSI (285 aa). Methionine 2 is modified (N-acetylmethionine). Methionine 2 is subject to N-acetylalanine. Position 54 is a phosphothreonine (threonine 54). A phosphoserine mark is found at serine 62 and serine 88. A Phosphothreonine modification is found at threonine 109. Residues serine 207 and serine 216 each carry the phosphoserine modification. N6-acetyllysine is present on isoleucine 228. Threonine 253 carries the post-translational modification Phosphothreonine. Tyrosine 262 carries the post-translational modification Phosphotyrosine. Serine 272 is modified (phosphoserine). Threonine 283 bears the Phosphothreonine mark. A Phosphoserine modification is found at serine 284.

The protein belongs to the tropomyosin family. Homodimer. Heterodimer of an alpha (TPM1, TPM3 or TPM4) and a beta (TPM2) chain. Interacts with TMOD1. Interacts with TNNT1.

It localises to the cytoplasm. The protein localises to the cytoskeleton. Functionally, binds to actin filaments in muscle and non-muscle cells. Plays a central role, in association with the troponin complex, in the calcium dependent regulation of vertebrate striated muscle contraction. Smooth muscle contraction is regulated by interaction with caldesmon. In non-muscle cells is implicated in stabilizing cytoskeleton actin filaments. This chain is Tropomyosin alpha-3 chain (Tpm3), found in Mus musculus (Mouse).